A 442-amino-acid chain; its full sequence is Probable glycine dehydrogenase (decarboxylating) subunit 1 (442 aa).

Belongs to the GcvP family. N-terminal subunit subfamily. In terms of assembly, the glycine cleavage system is composed of four proteins: P, T, L and H. In this organism, the P 'protein' is a heterodimer of two subunits.

The catalysed reaction is N(6)-[(R)-lipoyl]-L-lysyl-[glycine-cleavage complex H protein] + glycine + H(+) = N(6)-[(R)-S(8)-aminomethyldihydrolipoyl]-L-lysyl-[glycine-cleavage complex H protein] + CO2. Functionally, the glycine cleavage system catalyzes the degradation of glycine. The P protein binds the alpha-amino group of glycine through its pyridoxal phosphate cofactor; CO(2) is released and the remaining methylamine moiety is then transferred to the lipoamide cofactor of the H protein. The sequence is that of Probable glycine dehydrogenase (decarboxylating) subunit 1 from Geotalea daltonii (strain DSM 22248 / JCM 15807 / FRC-32) (Geobacter daltonii).